Reading from the N-terminus, the 78-residue chain is D-alanyl carrier protein (78 aa).

In terms of domain architecture, Carrier spans 1–78 (MEFRDQVLDL…KIVAVLEELR (78 aa)). S36 carries the O-(pantetheine 4'-phosphoryl)serine modification.

Belongs to the DltC family. 4'-phosphopantetheine is transferred from CoA to a specific serine of apo-DCP.

The protein resides in the cytoplasm. It participates in cell wall biogenesis; lipoteichoic acid biosynthesis. In terms of biological role, carrier protein involved in the D-alanylation of lipoteichoic acid (LTA). The loading of thioester-linked D-alanine onto DltC is catalyzed by D-alanine--D-alanyl carrier protein ligase DltA. The DltC-carried D-alanyl group is further transferred to cell membrane phosphatidylglycerol (PG) by forming an ester bond, probably catalyzed by DltD. D-alanylation of LTA plays an important role in modulating the properties of the cell wall in Gram-positive bacteria, influencing the net charge of the cell wall. The protein is D-alanyl carrier protein of Staphylococcus saprophyticus subsp. saprophyticus (strain ATCC 15305 / DSM 20229 / NCIMB 8711 / NCTC 7292 / S-41).